An 846-amino-acid chain; its full sequence is Leucine--tRNA ligase (846 aa).

The short motif at 42-52 (PYPSGNLHMGH) is the 'HIGH' region element. Residues 586–590 (KMSKS) carry the 'KMSKS' region motif. Residue lysine 589 coordinates ATP.

The protein belongs to the class-I aminoacyl-tRNA synthetase family.

The protein resides in the cytoplasm. The catalysed reaction is tRNA(Leu) + L-leucine + ATP = L-leucyl-tRNA(Leu) + AMP + diphosphate. This chain is Leucine--tRNA ligase, found in Heliobacterium modesticaldum (strain ATCC 51547 / Ice1).